The primary structure comprises 345 residues: N(4)-(Beta-N-acetylglucosaminyl)-L-asparaginase (345 aa).

Residues 1–23 (MARKWNLPFLLLPLVLGIPLVRG) form the signal peptide. N-linked (GlcNAc...) asparagine glycosylation occurs at Asn-38. Cys-64 and Cys-69 are joined by a disulfide. Residue Asn-149 is glycosylated (N-linked (GlcNAc...) asparagine). A disulfide bond links Cys-163 and Cys-179. Thr-205 (nucleophile) is an active-site residue. Substrate is bound by residues 233-236 (RVGD) and 256-259 (TGDG). Cys-285 and Cys-305 form a disulfide bridge. Asn-307 carries N-linked (GlcNAc...) asparagine glycosylation. A disulfide bridge connects residues Cys-316 and Cys-344.

Belongs to the Ntn-hydrolase family. In terms of assembly, heterotetramer of two alpha and two beta chains arranged as a dimer of alpha/beta heterodimers. N-glycosylated. In terms of processing, cleaved into an alpha and beta chain by autocatalysis; this activates the enzyme. The N-terminal residue of the beta subunit is responsible for the nucleophile hydrolase activity.

It is found in the lysosome. It carries out the reaction N(4)-(beta-N-acetyl-D-glucosaminyl)-L-asparagine + H2O = N-acetyl-beta-D-glucosaminylamine + L-aspartate + H(+). Its function is as follows. Cleaves the GlcNAc-Asn bond which joins oligosaccharides to the peptide of asparagine-linked glycoproteins. The chain is N(4)-(Beta-N-acetylglucosaminyl)-L-asparaginase (Aga) from Rattus norvegicus (Rat).